Here is a 332-residue protein sequence, read N- to C-terminus: Ribosomal RNA small subunit methyltransferase C (332 aa).

This sequence belongs to the methyltransferase superfamily. RsmC family. Monomer.

It is found in the cytoplasm. It catalyses the reaction guanosine(1207) in 16S rRNA + S-adenosyl-L-methionine = N(2)-methylguanosine(1207) in 16S rRNA + S-adenosyl-L-homocysteine + H(+). Functionally, specifically methylates the guanine in position 1207 of 16S rRNA in the 30S particle. The sequence is that of Ribosomal RNA small subunit methyltransferase C from Pseudomonas putida (strain GB-1).